A 432-amino-acid chain; its full sequence is Competence protein ComFA (432 aa).

Cysteine 40, cysteine 43, cysteine 60, and cysteine 63 together coordinate Zn(2+). One can recognise a Helicase ATP-binding domain in the interval 107-257 (LQAVDKQKPT…RLGELKRLNL (151 aa)). Residue 120–127 (AVTGAGKT) coordinates ATP. The short motif at 205–208 (DEVD) is the DEAD box element. Residues 289 to 432 (KLKSYIEKQR…IQMMNKEAGL (144 aa)) form the Helicase C-terminal domain.

Belongs to the DEAD box helicase family. Monomer and dimer in solution. Interacts with DprA and ComFC; ComFA-ComFC form rings about 150 Angstroms in diameter with apparent 6-fold symmetry. Requires Zn(2+) as cofactor.

Its subcellular location is the cytoplasm. In terms of biological role, involved in transformation (genetic competence for DNA uptake). DNA uptake is energy dependent, this protein may provide the driving force for DNA uptake. Does not have helicase activity, translocates on single-stranded (ss)DNA in a 5'-3' direction in an ATP-dependent manner, but does not unwind double-stranded (ds)DNA (tested with 5'- and 3'-overhang dsDNA). ATP hydrolysis causes the release of ssDNA from ComFA. A ssDNA-stimulated ATPase; dsDNA does not stimulate ATPase. ATP hydrolysis causes the release of ssDNA from ComFA. ComFC has no effect on ATPase activity. Binds ssDNA but only very poorly to dsDNA in the absence of ATP. Binding to ssDNA does not require free DNA ends. The polypeptide is Competence protein ComFA (Streptococcus pneumoniae (strain ATCC BAA-255 / R6)).